A 1058-amino-acid chain; its full sequence is MPKRTDIQKIMVIGSGPIIIGQAAEFDYAGTQACLSLKEEGYEVVLVNSNPATIMTDKEIADKVYIEPITLEFVTRILRKEGPDALLPTLGGQTGLNMAMELSKNGILDELGVELLGTKLSAIDQAEDRDLFKQLMEELEQPIPESEIVNTVEEAVAFAATIGYPVIVRPAFTLGGTGGGMCANEKELREITENGLKLSPVTQCLIERSIAGFKEIEYEVMRDSADNALVVCNMENFDPVGIHTGDSIVFAPAQTMSDYENQMLRDASLSIIRALKIEGGCNVQLALDPNSFKYYVIEVNPRVSRSSALASKATGYPIAKLAAKIAVGLTLDEVINPVTGSTYAMFEPALDYVVAKIPRFPFDKFEKGERRLGTQMKATGEVMAIGRNIEESLLKACRSLEIGVHHNEIPELAAVSDDTLIEKVVKAQDDRLFYVSEAIRRGYTPEEIAELTKIDIFYLDKLLHIFEIEQELGAHPQDLEVLKTAKLNGFSDRKIAELWGTTDDKVRQLRLENKIVPVYKMVDTCAAEFDSETPYFYSTYGWENESIKSDKESVLVLGSGPIRIGQGVEFDYATVHSVKAIQAAGYEAIIMNSNPETVSTDFSVSDKLYFEPLTFEDVMNVIDLEQPKGVIVQFGGQTAINLAEPLAKAGVTILGTQVADLDRAEDRDLFEQALKELDIPQPPGQTATNEEEAALAARKIGFPVLVRPSYVLGGRAMEIVENEEDLRSYMRTAVKASPDHPVLVDSYIVGQECEVDAISDGKNVLIPGIMEHIERAGVHSGDSMAVYPPQTLSQKVQETIADYTKRLAIGLHCLGMMNIQFVIKDEKVYVIEVNPRASRTVPFLSKVTNIPMAQVATKLILGQSLSELGYQNGLYPESTRVHIKAPVFSFTKLAKVDSLLGPEMKSTGEVMGSDATLEKALYKAFEASYLHLPTFGNVVFTIADDAKEEALNLARRFQNIGYGILATEGTAAFFASHGLQAQPVGKIGDDDKDIPSFVRKGRIQAIINTVGTKRTADEDGEQIRRSAIEHGVPLFTALDTANAMLKVLESRSFVTEAI.

The segment at 1-401 (MPKRTDIQKI…SLLKACRSLE (401 aa)) is carboxyphosphate synthetic domain. Residues R129, R169, G175, G176, R208, I210, E215, G241, I242, H243, Q284, and E298 each coordinate ATP. The 195-residue stretch at 133–327 (KQLMEELEQP…IAKLAAKIAV (195 aa)) folds into the ATP-grasp 1 domain. Residues Q284, E298, and N300 each contribute to the Mg(2+) site. Positions 284, 298, and 300 each coordinate Mn(2+). Residues 402 to 546 (IGVHHNEIPE…YSTYGWENES (145 aa)) form an oligomerization domain region. Positions 547 to 929 (IKSDKESVLV…ALYKAFEASY (383 aa)) are carbamoyl phosphate synthetic domain. One can recognise an ATP-grasp 2 domain in the interval 671–861 (EQALKELDIP…MAQVATKLIL (191 aa)). The ATP site is built by R707, S746, I748, E752, G777, V778, H779, S780, Q820, and E832. Q820, E832, and N834 together coordinate Mg(2+). Mn(2+) contacts are provided by Q820, E832, and N834. Positions 930-1058 (LHLPTFGNVV…ESRSFVTEAI (129 aa)) constitute an MGS-like domain. The interval 930–1058 (LHLPTFGNVV…ESRSFVTEAI (129 aa)) is allosteric domain.

Belongs to the CarB family. As to quaternary structure, composed of two chains; the small (or glutamine) chain promotes the hydrolysis of glutamine to ammonia, which is used by the large (or ammonia) chain to synthesize carbamoyl phosphate. Tetramer of heterodimers (alpha,beta)4. It depends on Mg(2+) as a cofactor. The cofactor is Mn(2+).

The catalysed reaction is hydrogencarbonate + L-glutamine + 2 ATP + H2O = carbamoyl phosphate + L-glutamate + 2 ADP + phosphate + 2 H(+). The enzyme catalyses hydrogencarbonate + NH4(+) + 2 ATP = carbamoyl phosphate + 2 ADP + phosphate + 2 H(+). It functions in the pathway amino-acid biosynthesis; L-arginine biosynthesis; carbamoyl phosphate from bicarbonate: step 1/1. The protein operates within pyrimidine metabolism; UMP biosynthesis via de novo pathway; (S)-dihydroorotate from bicarbonate: step 1/3. Large subunit of the glutamine-dependent carbamoyl phosphate synthetase (CPSase). CPSase catalyzes the formation of carbamoyl phosphate from the ammonia moiety of glutamine, carbonate, and phosphate donated by ATP, constituting the first step of 2 biosynthetic pathways, one leading to arginine and/or urea and the other to pyrimidine nucleotides. The large subunit (synthetase) binds the substrates ammonia (free or transferred from glutamine from the small subunit), hydrogencarbonate and ATP and carries out an ATP-coupled ligase reaction, activating hydrogencarbonate by forming carboxy phosphate which reacts with ammonia to form carbamoyl phosphate. This Streptococcus pneumoniae (strain ATCC 700669 / Spain 23F-1) protein is Carbamoyl phosphate synthase large chain.